A 93-amino-acid chain; its full sequence is UPF0147 protein MM_1385 (93 aa).

The protein belongs to the UPF0147 family.

The sequence is that of UPF0147 protein MM_1385 from Methanosarcina mazei (strain ATCC BAA-159 / DSM 3647 / Goe1 / Go1 / JCM 11833 / OCM 88) (Methanosarcina frisia).